Reading from the N-terminus, the 255-residue chain is Small ribosomal subunit protein uS2 (255 aa).

Residues 232–255 (ASGRDLGASEEVPVEPALEEASEA) form a disordered region.

This sequence belongs to the universal ribosomal protein uS2 family.

In Rhizobium meliloti (strain 1021) (Ensifer meliloti), this protein is Small ribosomal subunit protein uS2.